Reading from the N-terminus, the 662-residue chain is UvrABC system protein B (662 aa).

Residues 31-188 (DNIEGGEKAQ…NDLVDIQFER (158 aa)) form the Helicase ATP-binding domain. 44-51 (GATGTGKT) contacts ATP. Residues 97-120 (YYDYYQPEAYVPSSDTYIEKDSSV) carry the Beta-hairpin motif. The Helicase C-terminal domain occupies 435-601 (QIDDLLGEIN…TIKKEIRDLI (167 aa)). In terms of domain architecture, UVR spans 626-661 (KDMIKKLEGQMQEAAGLLDFELAAQIRDMILEIKAM).

This sequence belongs to the UvrB family. As to quaternary structure, forms a heterotetramer with UvrA during the search for lesions. Interacts with UvrC in an incision complex.

Its subcellular location is the cytoplasm. Its function is as follows. The UvrABC repair system catalyzes the recognition and processing of DNA lesions. A damage recognition complex composed of 2 UvrA and 2 UvrB subunits scans DNA for abnormalities. Upon binding of the UvrA(2)B(2) complex to a putative damaged site, the DNA wraps around one UvrB monomer. DNA wrap is dependent on ATP binding by UvrB and probably causes local melting of the DNA helix, facilitating insertion of UvrB beta-hairpin between the DNA strands. Then UvrB probes one DNA strand for the presence of a lesion. If a lesion is found the UvrA subunits dissociate and the UvrB-DNA preincision complex is formed. This complex is subsequently bound by UvrC and the second UvrB is released. If no lesion is found, the DNA wraps around the other UvrB subunit that will check the other stand for damage. This is UvrABC system protein B from Streptococcus sanguinis (strain SK36).